We begin with the raw amino-acid sequence, 440 residues long: C4-dicarboxylate transport protein (440 aa).

Transmembrane regions (helical) follow at residues 15 to 35 (VLVA…TGVA), 46 to 66 (LIKM…IAGM), 78 to 98 (YALL…LVVV), 146 to 166 (AFAN…GFAL), 190 to 210 (IINM…AFTI), 224 to 244 (LMAC…GGIC), 291 to 311 (VVGL…SIYL), 332 to 352 (ITLL…TGSG), and 354 to 374 (IVLA…LALI). The segment at 419 to 440 (GGSPLVDTRPTDDLGVAEGPAR) is disordered.

The protein belongs to the dicarboxylate/amino acid:cation symporter (DAACS) (TC 2.A.23) family.

It is found in the cell inner membrane. In terms of biological role, responsible for the transport of dicarboxylates such as succinate, fumarate, and malate from the periplasm across the membrane. The protein is C4-dicarboxylate transport protein of Pseudomonas entomophila (strain L48).